Consider the following 217-residue polypeptide: Ras-related protein RABA2a (217 aa).

Residue 19 to 26 participates in GTP binding; sequence GDSGVGKS. The Effector region motif lies at 41-49; sequence SKSTIGVEF. Residues 67–71, 125–128, and 155–156 each bind GTP; these read DTAGQ, NKTD, and SA. Cys213 carries S-palmitoyl cysteine lipidation. Cys214 carries the cysteine methyl ester modification. Residue Cys214 is the site of S-geranylgeranyl cysteine attachment. The propeptide at 215–217 is removed in mature form; that stretch reads SSS.

The protein belongs to the small GTPase superfamily. Rab family. As to expression, expressed in root tips.

The protein localises to the endosome membrane. Its subcellular location is the golgi apparatus. The protein resides in the trans-Golgi network membrane. Functionally, intracellular vesicle trafficking and protein transport. This Arabidopsis thaliana (Mouse-ear cress) protein is Ras-related protein RABA2a (RABA2A).